Consider the following 204-residue polypeptide: Holliday junction branch migration complex subunit RuvA (204 aa).

Residues 1–64 (MIGRLRGTLI…EDAQLLYGFN (64 aa)) form a domain I region. The segment at 65 to 143 (TVSERALFRE…GWGAGDLFTP (79 aa)) is domain II. Residues 144 to 155 (ATDAAPVDSTPV) form a flexible linker region. The tract at residues 156–204 (IAQNAQEEAMSALLALGYKPPQASKAVSQVAKAGMSSEELIREALKSMV) is domain III.

Belongs to the RuvA family. In terms of assembly, homotetramer. Forms an RuvA(8)-RuvB(12)-Holliday junction (HJ) complex. HJ DNA is sandwiched between 2 RuvA tetramers; dsDNA enters through RuvA and exits via RuvB. An RuvB hexamer assembles on each DNA strand where it exits the tetramer. Each RuvB hexamer is contacted by two RuvA subunits (via domain III) on 2 adjacent RuvB subunits; this complex drives branch migration. In the full resolvosome a probable DNA-RuvA(4)-RuvB(12)-RuvC(2) complex forms which resolves the HJ.

The protein localises to the cytoplasm. Its function is as follows. The RuvA-RuvB-RuvC complex processes Holliday junction (HJ) DNA during genetic recombination and DNA repair, while the RuvA-RuvB complex plays an important role in the rescue of blocked DNA replication forks via replication fork reversal (RFR). RuvA specifically binds to HJ cruciform DNA, conferring on it an open structure. The RuvB hexamer acts as an ATP-dependent pump, pulling dsDNA into and through the RuvAB complex. HJ branch migration allows RuvC to scan DNA until it finds its consensus sequence, where it cleaves and resolves the cruciform DNA. The sequence is that of Holliday junction branch migration complex subunit RuvA from Vibrio cholerae serotype O1 (strain ATCC 39541 / Classical Ogawa 395 / O395).